A 475-amino-acid chain; its full sequence is Amino acid permease 8 (475 aa).

The disordered stretch occupies residues 1 to 22; sequence MDAYNNPSAVESGDAAVKSVDD. At 1-31 the chain is on the cytoplasmic side; sequence MDAYNNPSAVESGDAAVKSVDDDGREKRTGT. A run of 2 helical transmembrane segments spans residues 32-52 and 53-73; these read FWTA…LSLA and WAIA…FAII. The Cytoplasmic portion of the chain corresponds to 74–120; that stretch reads TYYTSTLLADCYRSPDSITGTRNYNYMGVVRSYLGGKKVQLCGVAQY. The chain crosses the membrane as a helical span at residues 121-141; it reads VNLVGVTIGYTITASISLVAI. The Extracellular portion of the chain corresponds to 142–157; it reads GKSNCYHDKGHKAKCS. The helical transmembrane segment at 158–178 threads the bilayer; it reads VSNYPYMAAFGIVQIILSQLP. At 179–185 the chain is on the cytoplasmic side; sequence NFHKLSF. A helical transmembrane segment spans residues 186-206; it reads LSIIAAVMSFSYASIGIGLAI. Topologically, residues 207-236 are extracellular; it reads ATVASGKIGKTELTGTVIGVDVTASEKVWK. A helical transmembrane segment spans residues 237 to 257; sequence LFQAIGDIAFSYAFTTILIEI. Over 258 to 276 the chain is Cytoplasmic; sequence QDTLRSSPPENKVMKRASL. The chain crosses the membrane as a helical span at residues 277 to 297; sequence VGVSTTTVFYILCGCIGYAAF. The Extracellular portion of the chain corresponds to 298 to 314; the sequence is GNQAPGDFLTDFGFYEP. The chain crosses the membrane as a helical span at residues 315–335; the sequence is YWLIDFANACIALHLIGAYQV. The Cytoplasmic segment spans residues 336–378; that stretch reads YAQPFFQFVEENCNKKWPQSNFINKEYSSKVPLLGKCRVNLFR. Residues 379–398 traverse the membrane as a helical segment; sequence LVWRTCYVVLTTFVAMIFPF. Topologically, residues 399 to 401 are extracellular; sequence FNA. Residues 402 to 424 traverse the membrane as a helical segment; sequence ILGLLGAFAFWPLTVYFPVAMHI. Topologically, residues 425–441 are cytoplasmic; sequence AQAKVKKYSRRWLALNL. Residues 442–462 traverse the membrane as a helical segment; sequence LVLVCLIVSALAAVGSIIGLI. Residues 463–475 are Extracellular-facing; it reads NSVKSYKPFKNLD.

This sequence belongs to the amino acid/polyamine transporter 2 family. Amino acid/auxin permease (AAAP) (TC 2.A.18.2) subfamily. In terms of tissue distribution, expressed in flower buds, siliques, developing seeds and funiculi.

The protein resides in the cell membrane. Functionally, amino acid-proton symporter. Stereospecific transporter with a broad specificity for glutamate, aspartate and neutral and acidic amino acids. The chain is Amino acid permease 8 (AAP8) from Arabidopsis thaliana (Mouse-ear cress).